Reading from the N-terminus, the 36-residue chain is Phospholipase A2 hemilipin-2 (36 aa).

It belongs to the phospholipase A2 family. Group III subfamily. As to quaternary structure, heterodimer composed of a small subunit and a large subunit; disulfid-linked. Ca(2+) is required as a cofactor. In terms of tissue distribution, expressed by the venom gland.

Its subcellular location is the secreted. The enzyme catalyses a 1,2-diacyl-sn-glycero-3-phosphocholine + H2O = a 1-acyl-sn-glycero-3-phosphocholine + a fatty acid + H(+). Its function is as follows. Scorpion venom phospholipase A2 (PLA2) that impacts angiogenesis in vitro and in vivo without showing any cytotoxic or apoptotic signs. The antiangiogenic effect is independent from the catalytic activity and seems to be held by its small subunit. PLA2 catalyzes the calcium-dependent hydrolysis of the 2-acyl groups in 3-sn-phosphoglycerides. The chain is Phospholipase A2 hemilipin-2 from Hemiscorpius lepturus (Scorpion).